Here is a 520-residue protein sequence, read N- to C-terminus: TnpB-like protein L770 (520 aa).

Residues 23-44 (KTKKKVFVKKKPPDKKPLKKPV) form a disordered region. Residues Cys474, Cys477, Cys491, and Cys494 each contribute to the Zn(2+) site.

This sequence in the central section; belongs to the transposase 2 family. In the C-terminal section; belongs to the transposase 35 family.

This is TnpB-like protein L770 from Acanthamoeba polyphaga mimivirus (APMV).